The primary structure comprises 608 residues: Endo-1,4-beta-xylanase C (608 aa).

A signal peptide spans 1–25 (MKTFSVTKSSVVFAMALGMASTAFA). In terms of domain architecture, GH11 1 spans 40–250 (TITSNQTGKI…VNGEVRGGHM (211 aa)). Residue Glu-142 is the Nucleophile of the active site. Catalysis depends on Glu-237, which acts as the Proton donor. Residues 263–294 (SDPVSSSSVKSSSSTDAPKSSSSKGNGNVSGK) are compositionally biased toward low complexity. The interval 263–296 (SDPVSSSSVKSSSSTDAPKSSSSKGNGNVSGKID) is disordered. Positions 316–514 (NSSVTGNVGS…GSGSFDVTYF (199 aa)) constitute a GH11 2 domain. The active-site Nucleophile is Glu-409. Glu-501 serves as the catalytic Proton donor. The interval 520–539 (AHPLAQPEPESSSSEAKVES) is disordered. A compositionally biased stretch (low complexity) spans 527–539 (EPESSSSEAKVES).

The protein belongs to the glycosyl hydrolase 11 (cellulase G) family.

The catalysed reaction is Endohydrolysis of (1-&gt;4)-beta-D-xylosidic linkages in xylans.. Its pathway is glycan degradation; xylan degradation. Cleaves xylans with the production of xylose, xylobiose and xylo-oligosaccharides. This is Endo-1,4-beta-xylanase C (xynC) from Fibrobacter succinogenes (strain ATCC 19169 / S85).